A 213-amino-acid polypeptide reads, in one-letter code: Outer-membrane lipoprotein carrier protein (213 aa).

The N-terminal stretch at 1–23 (MKKLLKQSLLGFALVSMTGAAFA) is a signal peptide.

The protein belongs to the LolA family. Monomer.

It localises to the periplasm. Its function is as follows. Participates in the translocation of lipoproteins from the inner membrane to the outer membrane. Only forms a complex with a lipoprotein if the residue after the N-terminal Cys is not an aspartate (The Asp acts as a targeting signal to indicate that the lipoprotein should stay in the inner membrane). This is Outer-membrane lipoprotein carrier protein from Actinobacillus pleuropneumoniae serotype 3 (strain JL03).